Here is a 151-residue protein sequence, read N- to C-terminus: NADPH-dependent 7-cyano-7-deazaguanine reductase (151 aa).

Cysteine 51 (thioimide intermediate) is an active-site residue. Aspartate 58 serves as the catalytic Proton donor. Substrate contacts are provided by residues 73–75 (VES) and 92–93 (HE).

It belongs to the GTP cyclohydrolase I family. QueF type 1 subfamily.

It is found in the cytoplasm. It catalyses the reaction 7-aminomethyl-7-carbaguanine + 2 NADP(+) = 7-cyano-7-deazaguanine + 2 NADPH + 3 H(+). The protein operates within tRNA modification; tRNA-queuosine biosynthesis. In terms of biological role, catalyzes the NADPH-dependent reduction of 7-cyano-7-deazaguanine (preQ0) to 7-aminomethyl-7-deazaguanine (preQ1). This Bacteroides fragilis (strain ATCC 25285 / DSM 2151 / CCUG 4856 / JCM 11019 / LMG 10263 / NCTC 9343 / Onslow / VPI 2553 / EN-2) protein is NADPH-dependent 7-cyano-7-deazaguanine reductase.